A 259-amino-acid polypeptide reads, in one-letter code: Pycsar effector protein RsmPycTIR (259 aa).

1–120 (MVGGDEVIAN…RRVHEDFSGR (120 aa)) provides a ligand contact to a nucleoside 3',5'-cyclic phosphate. The tract at residues 126 to 229 (LATGISRRTS…AEFQYQISSS (104 aa)) is TIR-like. The next 3 helical transmembrane spans lie at 136–156 (GWNWTVISLTAGVLSAAAIWY), 169–189 (VLLPLVVGLTIFLLTLLADPV), and 234–254 (QATALLAPIVLGALAAYLFWI).

It localises to the cell inner membrane. The enzyme catalyses NAD(+) + H2O = ADP-D-ribose + nicotinamide + H(+). In terms of biological role, pycsar (pyrimidine cyclase system for antiphage resistance) provides immunity against bacteriophage. The pyrimidine cyclase (PycC) synthesizes cyclic nucleotides in response to infection; these serve as specific second messenger signals. The signals activate the adjacent effector, leading to bacterial cell death and abortive phage infection. A clade B Pycsar system. Its function is as follows. The effector gene of a two-gene Pycsar system. Expression of this and adjacent uridylate cyclase RsmPycC (AC A0A1V0HUX5) probably confers resistance to bacteriophage. The genes are probably only expressed in response to bacteriophage infection. Probably only responds to cUMP (produced by its cognate NTP cyclase), it may act by degrading NAD(+) and/or by impairing membrane integrity. The chain is Pycsar effector protein RsmPycTIR from Rhodovulum sp. (strain MB263).